The chain runs to 155 residues: Large ribosomal subunit protein eL24 (155 aa).

Residues 92–155 (AKRNMKPEVR…KSAPRVGGKR (64 aa)) form a disordered region. Over residues 96-117 (MKPEVRKAQRDQAIKAAKEQKK) the composition is skewed to basic and acidic residues. Over residues 124-133 (KASAPAPKAK) the composition is skewed to low complexity.

The protein belongs to the eukaryotic ribosomal protein eL24 family.

The sequence is that of Large ribosomal subunit protein eL24 (RpL24) from Spodoptera frugiperda (Fall armyworm).